A 366-amino-acid chain; its full sequence is Caffeic acid 3-O-methyltransferase (366 aa).

131 to 137 (MNQDKIL) contacts substrate. A substrate binding region spans residues 163–181 (AFEYHGTDPRFNKIFNRGM). The S-adenosyl-L-methionine site is built by Gly-209, Asp-232, Asp-252, Met-253, and Lys-266. His-270 serves as the catalytic Proton acceptor.

This sequence belongs to the class I-like SAM-binding methyltransferase superfamily. Cation-independent O-methyltransferase family. COMT subfamily. Homodimer.

It catalyses the reaction (E)-caffeate + S-adenosyl-L-methionine = (E)-ferulate + S-adenosyl-L-homocysteine + H(+). The protein operates within aromatic compound metabolism; phenylpropanoid biosynthesis. Its function is as follows. Catalyzes the conversion of caffeic acid to ferulic acid and of 5-hydroxyferulic acid to sinapic acid. The resulting products may subsequently be converted to the corresponding alcohols that are incorporated into lignins. This chain is Caffeic acid 3-O-methyltransferase (OMT), found in Eucalyptus gunnii (Cider gum).